Reading from the N-terminus, the 363-residue chain is Mitogen-activated protein kinase kinase 2 (363 aa).

At S56 the chain carries Phosphoserine. The Protein kinase domain occupies 70-330 (LDMVKVIGKG…AKELMEHPFL (261 aa)). ATP contacts are provided by residues 76 to 84 (IGKGSSGVV) and K99. Catalysis depends on D192, which acts as the Proton acceptor. Residues T220, T226, and T230 each carry the phosphothreonine modification.

Belongs to the protein kinase superfamily. STE Ser/Thr protein kinase family. MAP kinase kinase subfamily. Interacts with MEKK1, MPK4 and MPK6. May form a ternary complex composed of MEKK1 and MKK1/MKK2 and MPK4. Interacts with MPK10 and MPK11. Interacts with MAPKKK5 mainly in the cytosol. Post-translationally, phosphorylation at Thr-220 and Thr-226 by MAP kinase kinase kinases positively regulates kinase activity. Phosphorylated by MEKK1 in response to cold. Phosphorylated by MAPKKK5.

The catalysed reaction is L-seryl-[protein] + ATP = O-phospho-L-seryl-[protein] + ADP + H(+). The enzyme catalyses L-threonyl-[protein] + ATP = O-phospho-L-threonyl-[protein] + ADP + H(+). It carries out the reaction L-tyrosyl-[protein] + ATP = O-phospho-L-tyrosyl-[protein] + ADP + H(+). With respect to regulation, activated in response to cold and salt stresses through serine and threonine phosphorylation by MEKK1. Its function is as follows. MEKK1, MKK1/MKK2 and MPK4 function in a signaling pathway that modulates the expression of genes responding to biotic and abiotic stresses and also plays an important role in pathogen defense by negatively regulating innate immunity. Plays a role in abiotic stress tolerance and plant disease resistance through activation of MPK4 and MPK6 by phosphorylation. Acts redundantly with MKK1. This Arabidopsis thaliana (Mouse-ear cress) protein is Mitogen-activated protein kinase kinase 2 (MKK2).